The following is a 55-amino-acid chain: Large ribosomal subunit protein bL33 (55 aa).

This sequence belongs to the bacterial ribosomal protein bL33 family.

This Allorhizobium ampelinum (strain ATCC BAA-846 / DSM 112012 / S4) (Agrobacterium vitis (strain S4)) protein is Large ribosomal subunit protein bL33.